The sequence spans 359 residues: Probable F-box protein At3g61730 (359 aa).

Composition is skewed to basic and acidic residues over residues 1–14 and 37–48; these read MKTRSSDAEGDSRG and QKNDIQREEDGR. The disordered stretch occupies residues 1 to 60; it reads MKTRSSDAEGDSRGKMIAPVGEGNGGRKRKLVQSNEQKNDIQREEDGRAKRRIVQSSDQK. In terms of domain architecture, F-box; degenerate spans 82 to 128; it reads QSRFSWYEQDIWTYISRFLDGKSLVKLGATNKWFYKIAMEDTVWRFA.

As to quaternary structure, interacts with SKP1A. As to expression, expressed in flower buds, developing anthers, pollen grains, siliques, rosette leaves and roots. Detected at lower levels in open flowers, stems and cauline leaves. Expressed in young seedling in the hydathodes, shoot apical meristem, root tips and lateral root primordia.

It localises to the nucleus. Its function is as follows. Regulates tapetum degeneration and pollen maturation during anther development. The protein is Probable F-box protein At3g61730 (RMF) of Arabidopsis thaliana (Mouse-ear cress).